The primary structure comprises 70 residues: UPF0337 protein BT9727_3385 (70 aa).

The protein belongs to the UPF0337 (CsbD) family.

This is UPF0337 protein BT9727_3385 from Bacillus thuringiensis subsp. konkukian (strain 97-27).